A 150-amino-acid chain; its full sequence is Avidin-related protein 2 (150 aa).

An N-terminal signal peptide occupies residues 1–24 (MVHATSPLLLLLLLSLALVAPSLS). The Avidin-like domain maps to 26 to 147 (RKCSLTGEWD…GNNDFTRQHT (122 aa)). Cys28 and Cys105 are oxidised to a cystine. Residues Asn36, Ser40, Tyr57, Thr59, and Asp63 each contribute to the biotin site. 2 N-linked (GlcNAc...) asparagine glycosylation sites follow: Asn67 and Asn93. 3 residues coordinate biotin: Ser95, Ser99, and Asn140.

Homotetramer. Post-translationally, glycosylated.

The protein localises to the secreted. Functionally, forms a strong non-covalent specific complex with biotin. This Gallus gallus (Chicken) protein is Avidin-related protein 2 (AVR2).